A 412-amino-acid polypeptide reads, in one-letter code: [Pyruvate dehydrogenase (acetyl-transferring)] kinase isozyme 4, mitochondrial (412 aa).

Residues 138–368 (ILEYKDTCTV…DAIIYLKALS (231 aa)) form the Histidine kinase domain. ATP is bound by residues 254-261 (ELFKNAMR), D293, 312-313 (ST), and 329-334 (GFGYGL).

It belongs to the PDK/BCKDK protein kinase family. In terms of assembly, homodimer. Interacts with the pyruvate dehydrogenase complex subunit DLAT, and is part of the multimeric pyruvate dehydrogenase complex that contains multiple copies of pyruvate dehydrogenase (E1), dihydrolipoamide acetyltransferase (DLAT, E2) and lipoamide dehydrogenase (DLD, E3). In terms of tissue distribution, detected in skeletal muscle and heart.

It is found in the mitochondrion matrix. It catalyses the reaction L-seryl-[pyruvate dehydrogenase E1 alpha subunit] + ATP = O-phospho-L-seryl-[pyruvate dehydrogenase E1 alpha subunit] + ADP + H(+). Functionally, kinase that plays a key role in regulation of glucose and fatty acid metabolism and homeostasis via phosphorylation of the pyruvate dehydrogenase subunits PDHA1 and PDHA2. This inhibits pyruvate dehydrogenase activity, and thereby regulates metabolite flux through the tricarboxylic acid cycle, down-regulates aerobic respiration and inhibits the formation of acetyl-coenzyme A from pyruvate. Inhibition of pyruvate dehydrogenase decreases glucose utilization and increases fat metabolism in response to prolonged fasting and starvation. Plays an important role in maintaining normal blood glucose levels under starvation, and is involved in the insulin signaling cascade. Via its regulation of pyruvate dehydrogenase activity, plays an important role in maintaining normal blood pH and in preventing the accumulation of ketone bodies under starvation. In the fed state, mediates cellular responses to glucose levels and to a high-fat diet. Regulates both fatty acid oxidation and de novo fatty acid biosynthesis. Plays a role in the generation of reactive oxygen species. Protects detached epithelial cells against anoikis. Plays a role in cell proliferation via its role in regulating carbohydrate and fatty acid metabolism. The sequence is that of [Pyruvate dehydrogenase (acetyl-transferring)] kinase isozyme 4, mitochondrial (PDK4) from Ictidomys tridecemlineatus (Thirteen-lined ground squirrel).